We begin with the raw amino-acid sequence, 102 residues long: Small ribosomal subunit protein uS10 (102 aa).

It belongs to the universal ribosomal protein uS10 family. In terms of assembly, part of the 30S ribosomal subunit.

Involved in the binding of tRNA to the ribosomes. The chain is Small ribosomal subunit protein uS10 from Clavibacter michiganensis subsp. michiganensis (strain NCPPB 382).